A 312-amino-acid chain; its full sequence is Borealin-2 (312 aa).

Residues 1–10 are compositionally biased toward basic residues; it reads MPPRKAPAKR. The tract at residues 1-26 is disordered; sequence MPPRKAPAKRRSTDSGVERDRGALSQ. Basic and acidic residues predominate over residues 11–26; sequence RSTDSGVERDRGALSQ.

It belongs to the borealin family. As to quaternary structure, component of the CPC complex.

The protein resides in the nucleus. Its subcellular location is the chromosome. It is found in the centromere. Its function is as follows. Component of the chromosomal passenger complex (CPC), a complex that acts as a key regulator of mitosis. The CPC complex has essential functions at the centromere in ensuring correct chromosome alignment and segregation and is required for chromatin-induced microtubule stabilization and spindle assembly. This Gallus gallus (Chicken) protein is Borealin-2.